Consider the following 99-residue polypeptide: UPF0122 protein UUR10_0158 (99 aa).

This sequence belongs to the UPF0122 family.

Its function is as follows. Might take part in the signal recognition particle (SRP) pathway. This is inferred from the conservation of its genetic proximity to ftsY/ffh. May be a regulatory protein. This is UPF0122 protein UUR10_0158 from Ureaplasma urealyticum serovar 10 (strain ATCC 33699 / Western).